We begin with the raw amino-acid sequence, 358 residues long: ATPase ASNA1 homolog (358 aa).

K35–T42 serves as a coordination point for ATP. D64 is an active-site residue. ATP contacts are provided by E235 and N262.

It belongs to the arsA ATPase family. As to quaternary structure, homodimer.

The protein resides in the cytoplasm. The protein localises to the endoplasmic reticulum. In terms of biological role, ATPase required for the post-translational delivery of tail-anchored (TA) proteins to the endoplasmic reticulum. Recognizes and selectively binds the transmembrane domain of TA proteins in the cytosol. This complex then targets to the endoplasmic reticulum by membrane-bound receptors, where the tail-anchored protein is released for insertion. This process is regulated by ATP binding and hydrolysis. ATP binding drives the homodimer towards the closed dimer state, facilitating recognition of newly synthesized TA membrane proteins. ATP hydrolysis is required for insertion. Subsequently, the homodimer reverts towards the open dimer state, lowering its affinity for the membrane-bound receptor, and returning it to the cytosol to initiate a new round of targeting. The protein is ATPase ASNA1 homolog of Babesia bovis.